The following is a 341-amino-acid chain: Glyceraldehyde-3-phosphate dehydrogenase 4 (341 aa).

Residues Arg-13–Ile-14, Asp-35, and Lys-85 each bind NAD(+). D-glyceraldehyde 3-phosphate contacts are provided by residues Ser-157 to Thr-159, Thr-188, Thr-217 to Gly-218, and Arg-240. The Nucleophile role is filled by Cys-158. Asn-322 is a binding site for NAD(+).

It belongs to the glyceraldehyde-3-phosphate dehydrogenase family. As to quaternary structure, homotetramer.

The protein resides in the cytoplasm. The enzyme catalyses D-glyceraldehyde 3-phosphate + phosphate + NAD(+) = (2R)-3-phospho-glyceroyl phosphate + NADH + H(+). It participates in carbohydrate degradation; glycolysis; pyruvate from D-glyceraldehyde 3-phosphate: step 1/5. This chain is Glyceraldehyde-3-phosphate dehydrogenase 4 (gpd-4), found in Caenorhabditis elegans.